The primary structure comprises 380 residues: Interleukin-13 receptor subunit alpha-2 (380 aa).

Positions 1-26 (MAFVCLAIGCLYTFLISTTFGCTSSS) are cleaved as a signal peptide. The Extracellular portion of the chain corresponds to 27-343 (DTEIKVNPPQ…EDLSKKTLLR (317 aa)). Fibronectin type-III domains follow at residues 34 to 134 (PPQD…SPQG), 139 to 235 (KVQD…LQNI), and 240 to 333 (PPVY…CWEG). Cys-65 and Cys-113 are oxidised to a cystine. A glycan (N-linked (GlcNAc...) asparagine) is linked at Asn-115. Disulfide bonds link Cys-145-Cys-155 and Cys-184-Cys-197. Asn-215, Asn-290, and Asn-299 each carry an N-linked (GlcNAc...) asparagine glycan. Cys-269 and Cys-316 are oxidised to a cystine. The short motif at 322–326 (WSEWS) is the WSXWS motif element. The chain crosses the membrane as a helical span at residues 344–363 (FWLPFGFILILVIFVTGLLL). Residues 364 to 380 (RKPNTYPKMIPEFFCDT) are Cytoplasmic-facing.

The protein belongs to the type I cytokine receptor family. Type 5 subfamily. Interacts with IL4RA. Interacts with high affinity to interleukin-13 (IL13), but not to interleukin-4 (IL4). In terms of processing, cleaved by MMP8 leading to a soluble form that is also able to interact with IL13.

The protein localises to the cell membrane. Cell surface receptor that plays a role in the regulation of IL-13-mediated responses. Functions as a decoy receptor that inhibits IL-13- and IL-4-mediated signal transduction via the JAK-STAT pathway and thereby modulates immune responses and inflammation. Serves as a functional signaling receptor for IL-13 in an alternative pathway involving AP-1 ultimately leading to the production of TGFB1. This is Interleukin-13 receptor subunit alpha-2 (IL13RA2) from Homo sapiens (Human).